We begin with the raw amino-acid sequence, 110 residues long: Holo-[acyl-carrier-protein] synthase (110 aa).

D8 and E54 together coordinate Mg(2+).

This sequence belongs to the P-Pant transferase superfamily. AcpS family. Mg(2+) serves as cofactor.

It is found in the cytoplasm. It catalyses the reaction apo-[ACP] + CoA = holo-[ACP] + adenosine 3',5'-bisphosphate + H(+). Transfers the 4'-phosphopantetheine moiety from coenzyme A to a Ser of acyl-carrier-protein. The sequence is that of Holo-[acyl-carrier-protein] synthase from Mycoplasma mycoides subsp. mycoides SC (strain CCUG 32753 / NCTC 10114 / PG1).